A 364-amino-acid polypeptide reads, in one-letter code: DNA polymerase IV (364 aa).

Positions 14–198 (IIHIDMDAFF…LPIEKFHGVG (185 aa)) constitute a UmuC domain. The Mg(2+) site is built by D18 and D116. The active site involves E117.

It belongs to the DNA polymerase type-Y family. As to quaternary structure, monomer. It depends on Mg(2+) as a cofactor.

It is found in the cytoplasm. The enzyme catalyses DNA(n) + a 2'-deoxyribonucleoside 5'-triphosphate = DNA(n+1) + diphosphate. In terms of biological role, poorly processive, error-prone DNA polymerase involved in untargeted mutagenesis. Copies undamaged DNA at stalled replication forks, which arise in vivo from mismatched or misaligned primer ends. These misaligned primers can be extended by PolIV. Exhibits no 3'-5' exonuclease (proofreading) activity. May be involved in translesional synthesis, in conjunction with the beta clamp from PolIII. The polypeptide is DNA polymerase IV (Streptococcus pyogenes serotype M12 (strain MGAS2096)).